Reading from the N-terminus, the 252-residue chain is 5'-nucleotidase SurE (252 aa).

Asp8, Asp9, Ser42, and Asn94 together coordinate a divalent metal cation.

The protein belongs to the SurE nucleotidase family. The cofactor is a divalent metal cation.

It localises to the cytoplasm. It catalyses the reaction a ribonucleoside 5'-phosphate + H2O = a ribonucleoside + phosphate. Nucleotidase that shows phosphatase activity on nucleoside 5'-monophosphates. The sequence is that of 5'-nucleotidase SurE from Ehrlichia ruminantium (strain Welgevonden).